The primary structure comprises 342 residues: Ketol-acid reductoisomerase (NADP(+)) (342 aa).

Residues 2–181 (VKVYYNGDIQ…GGARAGVLET (180 aa)) enclose the KARI N-terminal Rossmann domain. NADP(+)-binding positions include 25–28 (YGSQ), arginine 48, serine 52, and 82–85 (DEQQ). Histidine 107 is a catalytic residue. Glycine 133 lines the NADP(+) pocket. The 146-residue stretch at 182 to 327 (TFKEETETDL…RKLREMMPFV (146 aa)) folds into the KARI C-terminal knotted domain. Mg(2+)-binding residues include aspartate 190, glutamate 194, glutamate 226, and glutamate 230. Serine 251 is a substrate binding site.

This sequence belongs to the ketol-acid reductoisomerase family. Mg(2+) is required as a cofactor.

It catalyses the reaction (2R)-2,3-dihydroxy-3-methylbutanoate + NADP(+) = (2S)-2-acetolactate + NADPH + H(+). The catalysed reaction is (2R,3R)-2,3-dihydroxy-3-methylpentanoate + NADP(+) = (S)-2-ethyl-2-hydroxy-3-oxobutanoate + NADPH + H(+). It functions in the pathway amino-acid biosynthesis; L-isoleucine biosynthesis; L-isoleucine from 2-oxobutanoate: step 2/4. It participates in amino-acid biosynthesis; L-valine biosynthesis; L-valine from pyruvate: step 2/4. In terms of biological role, involved in the biosynthesis of branched-chain amino acids (BCAA). Catalyzes an alkyl-migration followed by a ketol-acid reduction of (S)-2-acetolactate (S2AL) to yield (R)-2,3-dihydroxy-isovalerate. In the isomerase reaction, S2AL is rearranged via a Mg-dependent methyl migration to produce 3-hydroxy-3-methyl-2-ketobutyrate (HMKB). In the reductase reaction, this 2-ketoacid undergoes a metal-dependent reduction by NADPH to yield (R)-2,3-dihydroxy-isovalerate. In Bacillus pumilus (strain SAFR-032), this protein is Ketol-acid reductoisomerase (NADP(+)).